Consider the following 530-residue polypeptide: Phosphoenolpyruvate carboxykinase (ATP) (530 aa).

The substrate site is built by R58, Y195, and K201. Residues K201, H220, and 236-244 each bind ATP; that span reads GLSGTGKTT. 2 residues coordinate Mn(2+): K201 and H220. D257 contacts Mn(2+). ATP-binding positions include E285, R321, 440–441, and T446; that span reads RI. Position 321 (R321) interacts with substrate.

The protein belongs to the phosphoenolpyruvate carboxykinase (ATP) family. The cofactor is Mn(2+).

Its subcellular location is the cytoplasm. The catalysed reaction is oxaloacetate + ATP = phosphoenolpyruvate + ADP + CO2. Its pathway is carbohydrate biosynthesis; gluconeogenesis. Involved in the gluconeogenesis. Catalyzes the conversion of oxaloacetate (OAA) to phosphoenolpyruvate (PEP) through direct phosphoryl transfer between the nucleoside triphosphate and OAA. This Staphylococcus aureus (strain MRSA252) protein is Phosphoenolpyruvate carboxykinase (ATP).